The sequence spans 204 residues: Small ribosomal subunit protein uS4 (204 aa).

The S4 RNA-binding domain occupies 92–157; it reads RRLDALVLRS…KPLFEVAREG (66 aa).

It belongs to the universal ribosomal protein uS4 family. In terms of assembly, part of the 30S ribosomal subunit. Contacts protein S5. The interaction surface between S4 and S5 is involved in control of translational fidelity.

One of the primary rRNA binding proteins, it binds directly to 16S rRNA where it nucleates assembly of the body of the 30S subunit. Its function is as follows. With S5 and S12 plays an important role in translational accuracy. The polypeptide is Small ribosomal subunit protein uS4 (Streptomyces avermitilis (strain ATCC 31267 / DSM 46492 / JCM 5070 / NBRC 14893 / NCIMB 12804 / NRRL 8165 / MA-4680)).